The chain runs to 80 residues: Small ribosomal subunit protein bS16c (80 aa).

The protein belongs to the bacterial ribosomal protein bS16 family.

The protein resides in the plastid. The protein localises to the chloroplast. In Lotus japonicus (Lotus corniculatus var. japonicus), this protein is Small ribosomal subunit protein bS16c.